Here is a 201-residue protein sequence, read N- to C-terminus: Recombination protein RecR (201 aa).

Residues 60–75 (CSECGNMDVSDPCTVC) form a C4-type zinc finger. In terms of domain architecture, Toprim spans 83–178 (AAICVVETVG…SITSLARGVP (96 aa)).

It belongs to the RecR family.

Its function is as follows. May play a role in DNA repair. It seems to be involved in an RecBC-independent recombinational process of DNA repair. It may act with RecF and RecO. The protein is Recombination protein RecR of Maricaulis maris (strain MCS10) (Caulobacter maris).